We begin with the raw amino-acid sequence, 385 residues long: MVLSKENMLKYSAHLRAYNSACGDHPELKSFDSELQQKTSNLINSFTSDAKTGLVPLPQHAAYKEFTKHLAEVNQQVSDYIIGYGEVVWENSTLRSLVETYFESAKKTLDIAENVTEYVDEAKRGERYIVAAVAQFEKDKENDVGKKTKRYENTLRELKKFEAMGNPFDGDKFTTLFKLMHKEQESLLERVRETKEKLDEELKNIEMEISSRKKWSIISNVLFIGAFVAVAVGSMVLVCTGVGAGVGVAGLLSLPLIAIGWVGVHTILENKIQAREKQEEALKKAHRIANEMDKGMETDKVDMNSISGKVHALKSKITSMLNAVKDATEDGANEVDTKQVMETLTGDVVELTEDIKAVGDDVAKYSKMIEETSYHVLQKITGSGK.

The stretch at 138-214 (KDKENDVGKK…IEMEISSRKK (77 aa)) forms a coiled coil. The next 2 helical transmembrane spans lie at 217–237 (IISN…SMVL) and 242–262 (VGAG…IGWV). Residues 267-294 (ILENKIQAREKQEEALKKAHRIANEMDK) are a coiled coil.

The protein belongs to the UPF0496 family. Widely expressed.

It localises to the membrane. The chain is UPF0496 protein At3g28290 from Arabidopsis thaliana (Mouse-ear cress).